Here is a 469-residue protein sequence, read N- to C-terminus: Adenosylhomocysteinase (469 aa).

Positions 63, 139, and 164 each coordinate substrate. Residue 165–167 (TTT) coordinates NAD(+). The substrate site is built by lysine 194 and aspartate 198. NAD(+) contacts are provided by residues asparagine 199, 228–233 (GYGDVG), glutamate 251, asparagine 300, 321–323 (IGH), and asparagine 375.

Belongs to the adenosylhomocysteinase family. It depends on NAD(+) as a cofactor.

It is found in the cytoplasm. It carries out the reaction S-adenosyl-L-homocysteine + H2O = L-homocysteine + adenosine. It participates in amino-acid biosynthesis; L-homocysteine biosynthesis; L-homocysteine from S-adenosyl-L-homocysteine: step 1/1. In terms of biological role, may play a key role in the regulation of the intracellular concentration of adenosylhomocysteine. In Pseudomonas fluorescens (strain Pf0-1), this protein is Adenosylhomocysteinase.